The following is a 143-amino-acid chain: Nucleoside diphosphate kinase (143 aa).

Residues lysine 11, phenylalanine 59, arginine 87, threonine 93, arginine 104, and asparagine 114 each contribute to the ATP site. Histidine 117 (pros-phosphohistidine intermediate) is an active-site residue.

This sequence belongs to the NDK family. As to quaternary structure, homotetramer. The cofactor is Mg(2+).

Its subcellular location is the cytoplasm. It catalyses the reaction a 2'-deoxyribonucleoside 5'-diphosphate + ATP = a 2'-deoxyribonucleoside 5'-triphosphate + ADP. The enzyme catalyses a ribonucleoside 5'-diphosphate + ATP = a ribonucleoside 5'-triphosphate + ADP. Its function is as follows. Major role in the synthesis of nucleoside triphosphates other than ATP. The ATP gamma phosphate is transferred to the NDP beta phosphate via a ping-pong mechanism, using a phosphorylated active-site intermediate. This chain is Nucleoside diphosphate kinase, found in Sodalis glossinidius (strain morsitans).